A 173-amino-acid polypeptide reads, in one-letter code: Small ribosomal subunit protein uS5 (173 aa).

The S5 DRBM domain occupies 17–80; the sequence is WQERVIQIRR…ADGKKQLIEV (64 aa).

Belongs to the universal ribosomal protein uS5 family. In terms of assembly, part of the 30S ribosomal subunit. Contacts proteins S4 and S8.

Functionally, with S4 and S12 plays an important role in translational accuracy. Its function is as follows. Located at the back of the 30S subunit body where it stabilizes the conformation of the head with respect to the body. This is Small ribosomal subunit protein uS5 from Gloeothece citriformis (strain PCC 7424) (Cyanothece sp. (strain PCC 7424)).